A 624-amino-acid chain; its full sequence is Glucoamylase (624 aa).

The signal sequence occupies residues 1 to 18 (MRQFLALAAAASIAVADS). The CBM21 domain occupies 26 to 132 (NSPPDDKAVA…NSQQLNVQVE (107 aa)). N54, N70, N98, N111, N168, N267, and N333 each carry an N-linked (GlcNAc...) asparagine glycan. D340 serves as the catalytic Proton acceptor. E343 functions as the Proton donor in the catalytic mechanism. Residues N460 and N582 are each glycosylated (N-linked (GlcNAc...) asparagine).

Belongs to the glycosyl hydrolase 15 family.

The enzyme catalyses Hydrolysis of terminal (1-&gt;4)-linked alpha-D-glucose residues successively from non-reducing ends of the chains with release of beta-D-glucose.. The sequence is that of Glucoamylase (GAA) from Blastobotrys adeninivorans (Yeast).